The sequence spans 641 residues: Chaperone protein HtpG (641 aa).

The interval 1-351 (MTQSVHAETH…SNDLPLNVSR (351 aa)) is a; substrate-binding. Positions 352-568 (EILQDNKVTV…AHGMSTQMIK (217 aa)) are b. The tract at residues 569–641 (LMRAAGQPVP…SRINRLLLQA (73 aa)) is c.

This sequence belongs to the heat shock protein 90 family. In terms of assembly, homodimer.

It localises to the cytoplasm. Its function is as follows. Molecular chaperone. Has ATPase activity. In Aeromonas hydrophila subsp. hydrophila (strain ATCC 7966 / DSM 30187 / BCRC 13018 / CCUG 14551 / JCM 1027 / KCTC 2358 / NCIMB 9240 / NCTC 8049), this protein is Chaperone protein HtpG.